We begin with the raw amino-acid sequence, 84 residues long: U21-theraphotoxin-Cg1c (84 aa).

A signal peptide spans 1–21 (MKVSVLITLAVLGVMFLLTSA). The propeptide occupies 22-47 (EERGSDQMDSPAWLKSMERIFQSEER). Intrachain disulfides connect cysteine 49-cysteine 63, cysteine 56-cysteine 68, and cysteine 62-cysteine 76.

This sequence belongs to the neurotoxin 10 (Hwtx-1) family. 05 (F4a) subfamily. In terms of tissue distribution, expressed by the venom gland.

The protein resides in the secreted. Functionally, probable ion channel inhibitor. The chain is U21-theraphotoxin-Cg1c from Chilobrachys guangxiensis (Chinese earth tiger tarantula).